Reading from the N-terminus, the 199-residue chain is Glycerol-3-phosphate acyltransferase (199 aa).

5 consecutive transmembrane segments (helical) span residues 3–23 (AAVW…GVLV), 50–70 (WGPA…AVLV), 78–98 (DWML…SVFL), 113–133 (LLFL…SVIL), and 154–174 (LALG…LLIF).

This sequence belongs to the PlsY family. As to quaternary structure, probably interacts with PlsX.

Its subcellular location is the cell inner membrane. It catalyses the reaction an acyl phosphate + sn-glycerol 3-phosphate = a 1-acyl-sn-glycero-3-phosphate + phosphate. It functions in the pathway lipid metabolism; phospholipid metabolism. Catalyzes the transfer of an acyl group from acyl-phosphate (acyl-PO(4)) to glycerol-3-phosphate (G3P) to form lysophosphatidic acid (LPA). This enzyme utilizes acyl-phosphate as fatty acyl donor, but not acyl-CoA or acyl-ACP. The polypeptide is Glycerol-3-phosphate acyltransferase (Thermus thermophilus (strain ATCC 27634 / DSM 579 / HB8)).